A 251-amino-acid polypeptide reads, in one-letter code: 5-oxoprolinase subunit A (251 aa).

The protein belongs to the LamB/PxpA family. Forms a complex composed of PxpA, PxpB and PxpC.

It catalyses the reaction 5-oxo-L-proline + ATP + 2 H2O = L-glutamate + ADP + phosphate + H(+). Its function is as follows. Catalyzes the cleavage of 5-oxoproline to form L-glutamate coupled to the hydrolysis of ATP to ADP and inorganic phosphate. In Paracidovorax citrulli (strain AAC00-1) (Acidovorax citrulli), this protein is 5-oxoprolinase subunit A.